The chain runs to 100 residues: Small ribosomal subunit protein bS21 (100 aa).

A disordered region spans residues 61–100; the sequence is KLQREGLLPMKPKPVFGAGPGGDRGRGPAAGAGAGPRGPR. A compositionally biased stretch (gly residues) spans 78 to 100; it reads AGPGGDRGRGPAAGAGAGPRGPR.

The protein belongs to the bacterial ribosomal protein bS21 family.

The polypeptide is Small ribosomal subunit protein bS21 (Rhodopseudomonas palustris (strain BisB18)).